The sequence spans 201 residues: Large ribosomal subunit protein uL4 (201 aa).

Residues 44–66 are disordered; that stretch reads KAQKTRAEVRGGGKKPWRQKGTG. The segment covering 55-66 has biased composition (basic residues); sequence GGKKPWRQKGTG.

Belongs to the universal ribosomal protein uL4 family. Part of the 50S ribosomal subunit.

Its function is as follows. One of the primary rRNA binding proteins, this protein initially binds near the 5'-end of the 23S rRNA. It is important during the early stages of 50S assembly. It makes multiple contacts with different domains of the 23S rRNA in the assembled 50S subunit and ribosome. In terms of biological role, forms part of the polypeptide exit tunnel. This chain is Large ribosomal subunit protein uL4, found in Alteromonas mediterranea (strain DSM 17117 / CIP 110805 / LMG 28347 / Deep ecotype).